Here is a 240-residue protein sequence, read N- to C-terminus: Probable transcriptional regulatory protein HPG27_148 (240 aa).

Belongs to the TACO1 family.

The protein localises to the cytoplasm. This is Probable transcriptional regulatory protein HPG27_148 from Helicobacter pylori (strain G27).